The primary structure comprises 115 residues: UPF0102 protein NMA0341 (115 aa).

Belongs to the UPF0102 family.

The polypeptide is UPF0102 protein NMA0341 (Neisseria meningitidis serogroup A / serotype 4A (strain DSM 15465 / Z2491)).